The following is a 441-amino-acid chain: Endoglucanase E-2 (441 aa).

The segment at residues 1-31 (MSPRPLRALLGAAAAALVSAAALAFPSQAAA) is a signal peptide (tat-type signal). The tract at residues 32–320 (NDSPFYVNPN…YEMAIAAGGT (289 aa)) is catalytic. Residue Asp110 is part of the active site. Disulfide bonds link Cys111–Cys156 and Cys263–Cys298. Residue Asp148 is the Proton donor of the active site. Asp296 serves as the catalytic Nucleophile. A disordered region spans residues 317–343 (AGGTNPNPNPNPTPTPTPTPTPPPGSS). The tract at residues 321 to 340 (NPNPNPNPTPTPTPTPTPPP) is linker. Residues 323–341 (NPNPNPTPTPTPTPTPPPG) show a composition bias toward pro residues. The CBM2 domain maps to 339–441 (PPGSSGACTA…SVPTLTCAAS (103 aa)). Cys346 and Cys438 form a disulfide bridge.

This sequence belongs to the glycosyl hydrolase 6 (cellulase B) family. As to quaternary structure, homodimer. In terms of processing, predicted to be exported by the Tat system. The position of the signal peptide cleavage has been experimentally proven.

The enzyme catalyses Endohydrolysis of (1-&gt;4)-beta-D-glucosidic linkages in cellulose, lichenin and cereal beta-D-glucans.. It participates in glycan metabolism; cellulose degradation. This Thermobifida fusca (Thermomonospora fusca) protein is Endoglucanase E-2 (celB).